The chain runs to 176 residues: Ribosome rescue factor SmrB (176 aa).

A Smr domain is found at 97–172 (LDMHGMTQQE…GDGALLVLLS (76 aa)).

It belongs to the SmrB family. Associates with collided ribosomes, but not with correctly translating polysomes.

Functionally, acts as a ribosome collision sensor. Detects stalled/collided disomes (pairs of ribosomes where the leading ribosome is stalled and a second ribosome has collided with it) and endonucleolytically cleaves mRNA at the 5' boundary of the stalled ribosome. Stalled/collided disomes form a new interface (primarily via the 30S subunits) that binds SmrB. Cleaved mRNA becomes available for tmRNA ligation, leading to ribosomal subunit dissociation and rescue of stalled ribosomes. The polypeptide is Ribosome rescue factor SmrB (Vibrio vulnificus (strain YJ016)).